The chain runs to 458 residues: UDP-N-acetylmuramate--L-alanine ligase (458 aa).

118–124 (GTHGKTT) lines the ATP pocket.

This sequence belongs to the MurCDEF family.

It localises to the cytoplasm. The enzyme catalyses UDP-N-acetyl-alpha-D-muramate + L-alanine + ATP = UDP-N-acetyl-alpha-D-muramoyl-L-alanine + ADP + phosphate + H(+). It functions in the pathway cell wall biogenesis; peptidoglycan biosynthesis. In terms of biological role, cell wall formation. The chain is UDP-N-acetylmuramate--L-alanine ligase from Clostridium botulinum (strain ATCC 19397 / Type A).